We begin with the raw amino-acid sequence, 247 residues long: TM2 domain-containing protein 3 (247 aa).

Residues 1–30 (MDLMMALKRVCRVLLFVTQMYVFSGRGSLS) form the signal peptide. The Extracellular portion of the chain corresponds to 31–179 (FEYSQPVAQP…RTFPKMLYCN (149 aa)). N-linked (GlcNAc...) asparagine glycans are attached at residues N87, N99, N139, N155, N169, and N179. The chain crosses the membrane as a helical span at residues 180 to 200 (WTGGYKWSTALALSITLGGFG). Residues 183–231 (GYKWSTALALSITLGGFGADRFYLGQWREGLGKLFSFGGLGIWTLIDVF) form the TM2 domain. The Cytoplasmic portion of the chain corresponds to 201–215 (ADRFYLGQWREGLGK). A helical transmembrane segment spans residues 216–236 (LFSFGGLGIWTLIDVFLISVG). The Extracellular portion of the chain corresponds to 237–247 (YVGPADGSLYI).

This sequence belongs to the TM2 family.

Its subcellular location is the membrane. The sequence is that of TM2 domain-containing protein 3 (tm2d3) from Xenopus laevis (African clawed frog).